The primary structure comprises 414 residues: Glutamyl-tRNA reductase (414 aa).

Substrate is bound by residues 51-54 (TCNR), Ser-107, 112-114 (EYE), and Gln-118. Catalysis depends on Cys-52, which acts as the Nucleophile. NADP(+) is bound at residue 187–192 (GAGEIG).

This sequence belongs to the glutamyl-tRNA reductase family. In terms of assembly, homodimer.

It catalyses the reaction (S)-4-amino-5-oxopentanoate + tRNA(Glu) + NADP(+) = L-glutamyl-tRNA(Glu) + NADPH + H(+). The protein operates within porphyrin-containing compound metabolism; protoporphyrin-IX biosynthesis; 5-aminolevulinate from L-glutamyl-tRNA(Glu): step 1/2. Its function is as follows. Catalyzes the NADPH-dependent reduction of glutamyl-tRNA(Glu) to glutamate 1-semialdehyde (GSA). The polypeptide is Glutamyl-tRNA reductase (Sulfolobus acidocaldarius (strain ATCC 33909 / DSM 639 / JCM 8929 / NBRC 15157 / NCIMB 11770)).